A 269-amino-acid polypeptide reads, in one-letter code: 3-methyl-2-oxobutanoate hydroxymethyltransferase (269 aa).

Mg(2+) is bound by residues Asp48 and Asp87. Residues 48–49 (DS), Asp87, and Lys117 each bind 3-methyl-2-oxobutanoate. Glu119 is a binding site for Mg(2+). Catalysis depends on Glu186, which acts as the Proton acceptor.

The protein belongs to the PanB family. Homodecamer; pentamer of dimers. The cofactor is Mg(2+).

It is found in the cytoplasm. It carries out the reaction 3-methyl-2-oxobutanoate + (6R)-5,10-methylene-5,6,7,8-tetrahydrofolate + H2O = 2-dehydropantoate + (6S)-5,6,7,8-tetrahydrofolate. The protein operates within cofactor biosynthesis; (R)-pantothenate biosynthesis; (R)-pantoate from 3-methyl-2-oxobutanoate: step 1/2. Its function is as follows. Catalyzes the reversible reaction in which hydroxymethyl group from 5,10-methylenetetrahydrofolate is transferred onto alpha-ketoisovalerate to form ketopantoate. This chain is 3-methyl-2-oxobutanoate hydroxymethyltransferase, found in Moorella thermoacetica (strain ATCC 39073 / JCM 9320).